The chain runs to 392 residues: MQLPIPRINSTNYQRILMETKQSGDREKTIEDIKNVILLMPHKSPIVTNFISDLARDDAALKDRMVRTINEILETGDIHGLISASFTLRRLGVGGTENLWWVGKIPVVNPLFDGIDLAIPSDSLDKCREEAERMLETVDEESFEEVFCVVQIIKGFRFSVPECLSQLGPISRHKSLVDGIRILHREENSLYLCVLVLELAKKQGFLKILLEDLDSFDHEFRDLLLSLLFECFHSPGEENSVYISSSYTPLRTPEDLELFKHLTTENTARIMKRISGRGKVEKFFHEEEAAAGKEVLRISREEFEKTDFGDKKMFFRNFCLLGSPSISHFLTYLEIYKEHFVLDKEDQKAFLSIFFEVFGGFESFCRIVVGKMVQFKIIDPELVTDFDGNQAL.

This is an uncharacterized protein from Encephalitozoon cuniculi (strain GB-M1) (Microsporidian parasite).